The sequence spans 387 residues: Trichocyst matrix protein T2-C (387 aa).

A signal peptide spans 1 to 19; that stretch reads MKTIILALALIVLASSTQA. A propeptide spanning residues 20–48 is cleaved from the precursor; that stretch reads DVIATIKKIDQSPFGRTLFDTIWLELQTG. The stretch at 51–163 forms a coiled coil; the sequence is LDRLLQTLTD…KVLEHQEATA (113 aa). Positions 184–239 are excised as a propeptide; sequence KGKATKQPAHKFTKEVASMIQKHFTTSAKKAAKFQHRKGYSKLFKAFATIASKVEQ. A coiled-coil region spans residues 294–333; that stretch reads TALANAQSDLAALNDVIAQVEASLDTTNQRIENVSADRND.

The protein belongs to the TMP family. Post-translationally, two components are produced by post-translational processing from the precursor peptide.

It is found in the trichocyst. In terms of biological role, structural protein that crystallize inside the trichocyst matrix. This chain is Trichocyst matrix protein T2-C (T2C), found in Paramecium tetraurelia.